Here is a 69-residue protein sequence, read N- to C-terminus: DNA gyrase inhibitor YacG (69 aa).

Cys-13, Cys-16, Cys-32, and Cys-36 together coordinate Zn(2+).

It belongs to the DNA gyrase inhibitor YacG family. In terms of assembly, interacts with GyrB. Zn(2+) serves as cofactor.

Its function is as follows. Inhibits all the catalytic activities of DNA gyrase by preventing its interaction with DNA. Acts by binding directly to the C-terminal domain of GyrB, which probably disrupts DNA binding by the gyrase. The chain is DNA gyrase inhibitor YacG from Neisseria meningitidis serogroup A / serotype 4A (strain DSM 15465 / Z2491).